The following is a 170-amino-acid chain: Phosphopantetheine adenylyltransferase (170 aa).

Serine 14 contacts substrate. Residues 14–15 and histidine 22 contribute to the ATP site; that span reads SF. Residues lysine 46, leucine 79, and arginine 93 each coordinate substrate. ATP is bound by residues 94–96, glutamate 104, and 129–135; these read GIR and IAEVSST.

It belongs to the bacterial CoaD family. As to quaternary structure, homohexamer. It depends on Mg(2+) as a cofactor.

Its subcellular location is the cytoplasm. It catalyses the reaction (R)-4'-phosphopantetheine + ATP + H(+) = 3'-dephospho-CoA + diphosphate. Its pathway is cofactor biosynthesis; coenzyme A biosynthesis; CoA from (R)-pantothenate: step 4/5. Reversibly transfers an adenylyl group from ATP to 4'-phosphopantetheine, yielding dephospho-CoA (dPCoA) and pyrophosphate. The polypeptide is Phosphopantetheine adenylyltransferase (Neisseria meningitidis serogroup C (strain 053442)).